A 259-amino-acid polypeptide reads, in one-letter code: 5'-nucleotidase SurE (259 aa).

4 residues coordinate a divalent metal cation: D8, D9, S39, and N98.

Belongs to the SurE nucleotidase family. The cofactor is a divalent metal cation.

Its subcellular location is the cytoplasm. It carries out the reaction a ribonucleoside 5'-phosphate + H2O = a ribonucleoside + phosphate. In terms of biological role, nucleotidase that shows phosphatase activity on nucleoside 5'-monophosphates. The chain is 5'-nucleotidase SurE from Fervidobacterium nodosum (strain ATCC 35602 / DSM 5306 / Rt17-B1).